A 203-amino-acid polypeptide reads, in one-letter code: Nudix hydrolase 12, mitochondrial (203 aa).

The Nudix hydrolase domain maps to 18–166; sequence NFRLVSGCIP…WMQRALEEFL (149 aa). Positions 66–87 match the Nudix box motif; the sequence is GGWEDDETVLEAASREAIEEAG. The Mg(2+) site is built by Glu81 and Glu85.

It belongs to the Nudix hydrolase family. Requires Mg(2+) as cofactor. It depends on Mn(2+) as a cofactor. Expressed in roots, leaves, stems and inflorescences.

The protein resides in the mitochondrion. Its function is as follows. Probably mediates the hydrolysis of some nucleoside diphosphate derivatives. The chain is Nudix hydrolase 12, mitochondrial (NUDT12) from Arabidopsis thaliana (Mouse-ear cress).